The primary structure comprises 344 residues: MASSRVDTINLRIWLVSIICAALSFINVTVYLIAINFPNLGFPCAYFEINDLKAVNLSANNQIYQMTHQLYINPVQIICYVLIMAMLFLLIIIYYIVCCAKVFSSNKTSNVNQTTRDITWMGDTSSCFQFILIMDTFQLFVTALSFRLVALGAFAYCIFFVCFTTFNVTLITQFQSADKSFFAFQKIHPNLKGTVQFKTVVINLTELMLGYSTMFLGITTCLGVGNSIYIRSITVAYSSINTFLVMACIYSIVIEAVLVRYVKPLFGYYVGMFCGAVGLSFPILQYETFFESEWSTGLIINLAVIAIISIGFIICRLVRYLVKKKRRYKQLVNTESSSLMDENE.

The Intravirion segment spans residues Met-1 to Arg-12. A helical membrane pass occupies residues Ile-13–Ile-33. The Virion surface segment spans residues Ala-34 to Gln-76. Residues Ile-77–Val-97 form a helical membrane-spanning segment. Residues Cys-98 to Ser-125 lie on the Intravirion side of the membrane. A helical membrane pass occupies residues Ser-126 to Phe-146. A topological domain (virion surface) is located at residue Arg-147. A helical membrane pass occupies residues Leu-148–Val-168. Residues Thr-169 to Asn-203 lie on the Intravirion side of the membrane. Residues Leu-204–Val-224 form a helical membrane-spanning segment. Residues Gly-225 to Ser-238 are Virion surface-facing. Residues Ser-239–Val-259 form a helical membrane-spanning segment. The Intravirion portion of the chain corresponds to Arg-260–Lys-263. The helical transmembrane segment at Pro-264–Leu-284 threads the bilayer. The Virion surface segment spans residues Gln-285–Glu-293. Residues Trp-294–Ile-314 traverse the membrane as a helical segment. Topologically, residues Cys-315–Glu-344 are intravirion.

The protein belongs to the herpesviridae glycoprotein M family. As to quaternary structure, interacts (via N-terminus) with gN (via N-terminus). The gM-gN heterodimer forms the gCII complex.

The protein localises to the virion membrane. It localises to the host Golgi apparatus. Its subcellular location is the host trans-Golgi network. It is found in the host endosome membrane. The protein resides in the host nucleus inner membrane. Envelope glycoprotein important for virion assembly and egress. Plays a role in the correct incorporation of gH-gL into virion membrane. Directs the glycoprotein N (gN) to the host trans-Golgi network. The polypeptide is Envelope glycoprotein M (Homo sapiens (Human)).